A 203-amino-acid chain; its full sequence is Glycerol-3-phosphate acyltransferase (203 aa).

The next 6 helical transmembrane spans lie at 3-23, 51-71, 74-94, 116-136, 140-160, and 164-178; these read ILLA…VVVS, KAAI…VWLV, FGIG…LGHL, AVHP…AFFF, SLAA…LFGT, and PVAW…LLIW.

The protein belongs to the PlsY family. Probably interacts with PlsX.

The protein localises to the cell inner membrane. It catalyses the reaction an acyl phosphate + sn-glycerol 3-phosphate = a 1-acyl-sn-glycero-3-phosphate + phosphate. It functions in the pathway lipid metabolism; phospholipid metabolism. In terms of biological role, catalyzes the transfer of an acyl group from acyl-phosphate (acyl-PO(4)) to glycerol-3-phosphate (G3P) to form lysophosphatidic acid (LPA). This enzyme utilizes acyl-phosphate as fatty acyl donor, but not acyl-CoA or acyl-ACP. In Burkholderia pseudomallei (strain 1710b), this protein is Glycerol-3-phosphate acyltransferase.